The chain runs to 72 residues: Translation initiation factor IF-1 (72 aa).

One can recognise an S1-like domain in the interval 1 to 72 (MAKEELLEFP…TKGRITYRFK (72 aa)).

It belongs to the IF-1 family. As to quaternary structure, component of the 30S ribosomal translation pre-initiation complex which assembles on the 30S ribosome in the order IF-2 and IF-3, IF-1 and N-formylmethionyl-tRNA(fMet); mRNA recruitment can occur at any time during PIC assembly.

It is found in the cytoplasm. One of the essential components for the initiation of protein synthesis. Stabilizes the binding of IF-2 and IF-3 on the 30S subunit to which N-formylmethionyl-tRNA(fMet) subsequently binds. Helps modulate mRNA selection, yielding the 30S pre-initiation complex (PIC). Upon addition of the 50S ribosomal subunit IF-1, IF-2 and IF-3 are released leaving the mature 70S translation initiation complex. This chain is Translation initiation factor IF-1, found in Maricaulis maris (strain MCS10) (Caulobacter maris).